The chain runs to 156 residues: Ribosome maturation factor RimP (156 aa).

This sequence belongs to the RimP family.

Its subcellular location is the cytoplasm. In terms of biological role, required for maturation of 30S ribosomal subunits. The sequence is that of Ribosome maturation factor RimP from Bacillus cereus (strain G9842).